A 399-amino-acid chain; its full sequence is Tyrosine--tRNA ligase (399 aa).

Residues 42 to 51 (PTAPDLHLGH) carry the 'HIGH' region motif. The short motif at 226–230 (KMSKS) is the 'KMSKS' region element. Lysine 229 serves as a coordination point for ATP. Residues 337 to 398 (LPVFQVVKQA…GKRKFASVVL (62 aa)) form the S4 RNA-binding domain.

It belongs to the class-I aminoacyl-tRNA synthetase family. TyrS type 2 subfamily. As to quaternary structure, homodimer.

The protein resides in the cytoplasm. It carries out the reaction tRNA(Tyr) + L-tyrosine + ATP = L-tyrosyl-tRNA(Tyr) + AMP + diphosphate + H(+). Functionally, catalyzes the attachment of tyrosine to tRNA(Tyr) in a two-step reaction: tyrosine is first activated by ATP to form Tyr-AMP and then transferred to the acceptor end of tRNA(Tyr). This Aromatoleum aromaticum (strain DSM 19018 / LMG 30748 / EbN1) (Azoarcus sp. (strain EbN1)) protein is Tyrosine--tRNA ligase.